A 209-amino-acid polypeptide reads, in one-letter code: Uracil phosphoribosyltransferase (209 aa).

5-phospho-alpha-D-ribose 1-diphosphate-binding positions include Arg-79, Arg-104, and 131–139 (DPMLATGGS). Uracil contacts are provided by residues Ile-194 and 199 to 201 (GDA). Position 200 (Asp-200) interacts with 5-phospho-alpha-D-ribose 1-diphosphate.

This sequence belongs to the UPRTase family. Mg(2+) is required as a cofactor.

It carries out the reaction UMP + diphosphate = 5-phospho-alpha-D-ribose 1-diphosphate + uracil. Its pathway is pyrimidine metabolism; UMP biosynthesis via salvage pathway; UMP from uracil: step 1/1. Its activity is regulated as follows. Allosterically activated by GTP. Catalyzes the conversion of uracil and 5-phospho-alpha-D-ribose 1-diphosphate (PRPP) to UMP and diphosphate. This Clostridium botulinum (strain Alaska E43 / Type E3) protein is Uracil phosphoribosyltransferase.